The sequence spans 444 residues: Transcriptional coactivator nsrH (444 aa).

One can recognise an HTH iclR-type domain in the interval 74–144 (ASQVSEILAC…ERDHVAHTPL (71 aa)). The H-T-H motif DNA-binding region spans 104–123 (IKDIADLTNVPESRLRRIIR).

The protein localises to the nucleus. Functionally, transcriptional coactivator; part of the gene cluster that mediates the biosynthesis of the tetrahydroxanthone dimer neosartorin, which exhibits antibacterial activity. This chain is Transcriptional coactivator nsrH, found in Aspergillus novofumigatus (strain IBT 16806).